The sequence spans 469 residues: Protein RUFY3 (469 aa).

Phosphothreonine occurs at positions 5 and 12. 2 positions are modified to phosphoserine: S34 and S49. T51 bears the Phosphothreonine mark. Positions D95 to E227 constitute an RUN domain. Coiled-coil stretches lie at residues N271 to E362 and K422 to K463.

Interacts with PAK1. Interacts (via C-terminus) with Ras-related Rab-5 proteins. Interacts (via C-terminus) with Ras-related Rap-2 proteins. Interacts with PIK3CA and PIK3R1. Interacts (via N-terminus) with FSCN1; this interaction induces neuron axon development. Interacts with DBN1. Interacts (via the second coiled coil) with GTP-, but not GDP-bound ARL8A and ARL8B. Interacts with dynactin/DCTN1 and the dynein intermediate chain DYNC1I1/2. Directly interacts with DYNC1LI1. Post-translationally, isoform 1 is partially phosphorylated. Phosphorylated by PAK1. As to expression, expressed in brain (at protein level).

Its subcellular location is the cytoplasm. The protein localises to the endomembrane system. It localises to the cell projection. The protein resides in the invadopodium. It is found in the growth cone. Its subcellular location is the perikaryon. The protein localises to the filopodium. It localises to the lamellipodium. The protein resides in the lysosome. Functionally, ARL8 effector that promotes the coupling of endolysosomes to dynein-dynactin for retrograde transport along microtubules. Acts by binding both GTP-bound ARL8 and dynein-dynactin. In nonneuronal cells, promotes concentration of endolysosomes in the juxtanuclear area. In hippocampal neurons, drives retrograde transport of endolysosomes from the axon to the soma. Plays a role in the generation of neuronal polarity formation and axon growth. Implicated in the formation of a single axon by developing neurons. May inhibit the formation of additional axons by inhibition of PI3K in minor neuronal processes. Plays a role in the formation of F-actin-enriched protrusive structures at the cell periphery. Plays a role in cytoskeletal organization by regulating the subcellular localization of FSCN1 and DBN1 at axonal growth cones. The chain is Protein RUFY3 from Rattus norvegicus (Rat).